The following is a 218-amino-acid chain: Cytidylate kinase (218 aa).

10 to 18 (GPAGSGKST) provides a ligand contact to ATP.

The protein belongs to the cytidylate kinase family. Type 1 subfamily.

Its subcellular location is the cytoplasm. The enzyme catalyses CMP + ATP = CDP + ADP. It catalyses the reaction dCMP + ATP = dCDP + ADP. The polypeptide is Cytidylate kinase (Fusobacterium nucleatum subsp. nucleatum (strain ATCC 25586 / DSM 15643 / BCRC 10681 / CIP 101130 / JCM 8532 / KCTC 2640 / LMG 13131 / VPI 4355)).